Reading from the N-terminus, the 237-residue chain is 1-(5-phosphoribosyl)-5-[(5-phosphoribosylamino)methylideneamino] imidazole-4-carboxamide isomerase (237 aa).

Asp8 (proton acceptor) is an active-site residue. Asp129 (proton donor) is an active-site residue.

Belongs to the HisA/HisF family.

The protein localises to the cytoplasm. The catalysed reaction is 1-(5-phospho-beta-D-ribosyl)-5-[(5-phospho-beta-D-ribosylamino)methylideneamino]imidazole-4-carboxamide = 5-[(5-phospho-1-deoxy-D-ribulos-1-ylimino)methylamino]-1-(5-phospho-beta-D-ribosyl)imidazole-4-carboxamide. It functions in the pathway amino-acid biosynthesis; L-histidine biosynthesis; L-histidine from 5-phospho-alpha-D-ribose 1-diphosphate: step 4/9. In Roseiflexus castenholzii (strain DSM 13941 / HLO8), this protein is 1-(5-phosphoribosyl)-5-[(5-phosphoribosylamino)methylideneamino] imidazole-4-carboxamide isomerase.